Reading from the N-terminus, the 369-residue chain is UPF0284 protein cce_1085 (369 aa).

Belongs to the UPF0284 family.

The protein is UPF0284 protein cce_1085 of Crocosphaera subtropica (strain ATCC 51142 / BH68) (Cyanothece sp. (strain ATCC 51142)).